Here is a 440-residue protein sequence, read N- to C-terminus: Probable D-serine dehydratase (440 aa).

Lys-111 bears the N6-(pyridoxal phosphate)lysine mark.

It belongs to the serine/threonine dehydratase family. DsdA subfamily. Pyridoxal 5'-phosphate is required as a cofactor.

It catalyses the reaction D-serine = pyruvate + NH4(+). The protein is Probable D-serine dehydratase of Rhizobium leguminosarum bv. trifolii (strain WSM2304).